Reading from the N-terminus, the 427-residue chain is Adenylosuccinate synthetase (427 aa).

Residues 12–18 and 40–42 contribute to the GTP site; these read GDEGKGK and GHT. Asp-13 acts as the Proton acceptor in catalysis. The Mg(2+) site is built by Asp-13 and Gly-40. IMP contacts are provided by residues 13 to 16, 38 to 41, Thr-128, Arg-142, Gln-223, Thr-238, and Arg-302; these read DEGK and NAGH. Residue His-41 is the Proton donor of the active site. Position 298–304 (298–304) interacts with substrate; the sequence is TTTGRPR. GTP-binding positions include Arg-304, 330-332, and 412-414; these read KLD and GVG.

Belongs to the adenylosuccinate synthetase family. As to quaternary structure, homodimer. Requires Mg(2+) as cofactor.

Its subcellular location is the cytoplasm. It carries out the reaction IMP + L-aspartate + GTP = N(6)-(1,2-dicarboxyethyl)-AMP + GDP + phosphate + 2 H(+). The protein operates within purine metabolism; AMP biosynthesis via de novo pathway; AMP from IMP: step 1/2. Plays an important role in the de novo pathway of purine nucleotide biosynthesis. Catalyzes the first committed step in the biosynthesis of AMP from IMP. The protein is Adenylosuccinate synthetase of Pelotomaculum thermopropionicum (strain DSM 13744 / JCM 10971 / SI).